Consider the following 197-residue polypeptide: Rac-like GTP-binding protein RHO1 (197 aa).

A GTP-binding site is contributed by 13 to 20; that stretch reads GDGAVGKT. Positions 35–43 match the Effector region motif; it reads YVPTVFDNF. GTP is bound by residues 60–64 and 118–121; these read DTAGQ and TKLD. Cysteine methyl ester is present on Cys194. A lipid anchor (S-geranylgeranyl cysteine) is attached at Cys194. Residues 195-197 constitute a propeptide, removed in mature form; sequence SIL.

It belongs to the small GTPase superfamily. Rho family.

The protein resides in the cytoplasm. It localises to the membrane. Inactive GDP-bound Rho GTPases reside in the cytosol, are found in a complex with Rho GDP-dissociation inhibitors (Rho GDIs), and are released from the GDI protein in order to translocate to membranes upon activation. The chain is Rac-like GTP-binding protein RHO1 (RHO1) from Beta vulgaris (Sugar beet).